The primary structure comprises 134 residues: ATP synthase epsilon chain, chloroplastic (134 aa).

This sequence belongs to the ATPase epsilon chain family. F-type ATPases have 2 components, CF(1) - the catalytic core - and CF(0) - the membrane proton channel. CF(1) has five subunits: alpha(3), beta(3), gamma(1), delta(1), epsilon(1). CF(0) has three main subunits: a, b and c.

It is found in the plastid. The protein resides in the chloroplast thylakoid membrane. Functionally, produces ATP from ADP in the presence of a proton gradient across the membrane. In Amborella trichopoda, this protein is ATP synthase epsilon chain, chloroplastic.